We begin with the raw amino-acid sequence, 114 residues long: MTANVSGIGSVLQQMQSMAAQASGGVASPTAALAGSGAATAGTFASAMKASLDKISGDQQHALGEAKAFEVGAPNISLNDVMVDMQKANIGFQFGLQVRNKLVSAYNDIMQMSV.

This sequence belongs to the FliE family.

The protein resides in the bacterial flagellum basal body. In Burkholderia cenocepacia (strain ATCC BAA-245 / DSM 16553 / LMG 16656 / NCTC 13227 / J2315 / CF5610) (Burkholderia cepacia (strain J2315)), this protein is Flagellar hook-basal body complex protein FliE.